The following is a 435-amino-acid chain: FAD-dependent monooxygenase ATEG_07662 (435 aa).

A helical membrane pass occupies residues 8–28 (PLDVAIIGGGIIGIMTALGLL). Residues Glu-38, Ala-51, and Arg-119 each coordinate FAD. An N-linked (GlcNAc...) asparagine glycan is attached at Asn-191. The active site involves Arg-201. FAD contacts are provided by Asp-317 and Ala-330.

The protein belongs to the paxM FAD-dependent monooxygenase family. It depends on FAD as a cofactor.

The protein resides in the membrane. The protein operates within secondary metabolite biosynthesis. In terms of biological role, FAD-dependent monooxygenase; part of the cluster B that mediates the biosynthesis of azasperpyranones, members of the azaphilone family that exhibit anti-cancer activities. Azasperpyranones are synthesized by 2 clusters, A and B. Cluster A is responsible for the production of the polyhydric phenol moiety while the azaphilonoid scaffold is produced by the cluster B. The non-reducing polyketide synthase ATEG_03629 produces 5-methyl orsellinic acid, which is then reduced to 5-methyl orsellinic aldehyde by the NRPS-like protein ATEG_03630. 5-methyl orsellinic aldehyde is then first hydroxylated by the FAD-dependent monooxygenase ATEG_03635 and subsequently hydroxylated by the cytochrome P450 monooxygenase ATEG_03631 to produce the unstable polyhydric phenol precursor of azasperpyranones. On the other hand, the polyketide synthase ATEG_07659 is responsible for producing the 3,5-dimethyloctadienone moiety from acetyl-CoA, three malonyl-CoA, and two S-adenosyl methionines (SAM). The 3,5-dimethyloctadienone moiety is then loaded onto the SAT domain of ATEG_07661 and extended with four malonyl-CoA and one SAM, which leads to the formation of 2,4-dihydroxy-6-(5,7-dimethyl-2-oxo-trans-3-trans-5-nonadienyl)-3-methylbenzaldehyde (compound 8) after reductive release and aldol condensation. The FAD-dependent monooxygenase ATEG_07662 is the next enzyme in the biosynthesis sequence and hydroxylates the side chain at the benzylic position of compound 8. In Aspergillus nidulans, afoF, the ortholog of the FAD-dependent oxygenase ATEG_07660, is the key enzyme for the biosynthesis of asperfuranone by catalyzing the hydroxylation at C-8 of to prevent the formation of a six-membered ring hemiacetal intermediate and thus facilitating the formation of a five-membered ring to produce asperfuranone. In Aspergillus terreus, ATEG_07660 is probably not functional, which leads to the formation of the six-membered ring hemiacetal intermediate presperpyranone instead of asperfuranone. Finally, ATEG_03636 is involved in the condensation of the polyhydric phenol moiety produced by cluster A and the perasperpyranone precursor produced by cluster B, to yield azasperpyranone A. Further modifications of azasperpyranone A result in the production of derivatives, including azasperpyranone B to F. This chain is FAD-dependent monooxygenase ATEG_07662, found in Aspergillus terreus (strain NIH 2624 / FGSC A1156).